The sequence spans 1033 residues: Putative U-box domain-containing protein 42 (1033 aa).

The disordered stretch occupies residues 145–226; sequence SQSQMTDIPD…SSNASSQRKY (82 aa). The span at 200-226 shows a compositional bias: polar residues; that stretch reads LSKSQSQSTEIPDIPSQSSNASSQRKY. One can recognise a U-box domain in the interval 245–322; that stretch reads PPYQAFICPL…QEWKVRNEAA (78 aa). ARM repeat units follow at residues 483–522, 523–562, 564–608, 610–659, and 665–704; these read PENI…EIDI, GHEK…HISL, HPNN…NILE, GLEH…SLSK, and ATIV…ALTP.

The enzyme catalyses S-ubiquitinyl-[E2 ubiquitin-conjugating enzyme]-L-cysteine + [acceptor protein]-L-lysine = [E2 ubiquitin-conjugating enzyme]-L-cysteine + N(6)-ubiquitinyl-[acceptor protein]-L-lysine.. It participates in protein modification; protein ubiquitination. Functions as an E3 ubiquitin ligase. The polypeptide is Putative U-box domain-containing protein 42 (PUB42) (Arabidopsis thaliana (Mouse-ear cress)).